Reading from the N-terminus, the 108-residue chain is Trp operon repressor homolog (108 aa).

Residues 59–82 mediate DNA binding; sequence QRQISQLLGVGVATITRGSNELKS.

It belongs to the TrpR family. Homodimer.

The protein resides in the cytoplasm. Its function is as follows. This protein is an aporepressor. When complexed with L-tryptophan it binds the operator region of the trp operon and prevents the initiation of transcription. In Aliivibrio salmonicida (strain LFI1238) (Vibrio salmonicida (strain LFI1238)), this protein is Trp operon repressor homolog.